Reading from the N-terminus, the 270-residue chain is Aliphatic sulfonates import ATP-binding protein SsuB 2 (270 aa).

The ABC transporter domain maps to 17-241 (LLDLRIARKL…PRDRRDPSLA (225 aa)). 50-57 (GPSGCGKS) is a binding site for ATP.

Belongs to the ABC transporter superfamily. Aliphatic sulfonates importer (TC 3.A.1.17.2) family. In terms of assembly, the complex is composed of two ATP-binding proteins (SsuB), two transmembrane proteins (SsuC) and a solute-binding protein (SsuA).

The protein localises to the cell inner membrane. It catalyses the reaction ATP + H2O + aliphatic sulfonate-[sulfonate-binding protein]Side 1 = ADP + phosphate + aliphatic sulfonateSide 2 + [sulfonate-binding protein]Side 1.. Functionally, part of the ABC transporter complex SsuABC involved in aliphatic sulfonates import. Responsible for energy coupling to the transport system. In Burkholderia cenocepacia (strain HI2424), this protein is Aliphatic sulfonates import ATP-binding protein SsuB 2.